The chain runs to 325 residues: Mitochondrial thiamine pyrophosphate carrier 1 (325 aa).

Solcar repeat units follow at residues 12–111 (GSRL…TTLL), 122–209 (PPSA…LRPH), and 216–312 (PFSS…ALKF). The next 6 helical transmembrane spans lie at 17 to 35 (VTAAGATAGLVARFVIAPL), 92 to 108 (LLYVCYSAIQFTTYRTT), 127 to 143 (SFVAGAIGGGTATAATY), 184 to 200 (VWDRAWAQIIPYMSFFF), 223 to 239 (VARTMASVMAKSRTFPL), and 287 to 304 (GLTVSLLKAAPASAVTMW).

This sequence belongs to the mitochondrial carrier (TC 2.A.29) family.

It is found in the mitochondrion inner membrane. Mitochondrial transporter that mediates uptake of thiamine pyrophosphate (ThPP) into mitochondria. This chain is Mitochondrial thiamine pyrophosphate carrier 1 (TPC1), found in Chaetomium globosum (strain ATCC 6205 / CBS 148.51 / DSM 1962 / NBRC 6347 / NRRL 1970) (Soil fungus).